A 233-amino-acid polypeptide reads, in one-letter code: Octanoyltransferase (233 aa).

Positions 32–213 constitute a BPL/LPL catalytic domain; that stretch reads NNIDGILLLL…NFKMIFETDL (182 aa). Residues 77 to 84, 144 to 146, and 157 to 159 contribute to the substrate site; these read RGGNVTYH, AIG, and GFA. Catalysis depends on Cys-175, which acts as the Acyl-thioester intermediate.

The protein belongs to the LipB family.

The protein resides in the cytoplasm. It carries out the reaction octanoyl-[ACP] + L-lysyl-[protein] = N(6)-octanoyl-L-lysyl-[protein] + holo-[ACP] + H(+). The protein operates within protein modification; protein lipoylation via endogenous pathway; protein N(6)-(lipoyl)lysine from octanoyl-[acyl-carrier-protein]: step 1/2. Catalyzes the transfer of endogenously produced octanoic acid from octanoyl-acyl-carrier-protein onto the lipoyl domains of lipoate-dependent enzymes. Lipoyl-ACP can also act as a substrate although octanoyl-ACP is likely to be the physiological substrate. The polypeptide is Octanoyltransferase (Clostridium kluyveri (strain ATCC 8527 / DSM 555 / NBRC 12016 / NCIMB 10680 / K1)).